The sequence spans 405 residues: Potassium channel subfamily K member 13 (405 aa).

At 1–19 (MAGRGCSCSPGHLNEDNAR) the chain is on the cytoplasmic side. The chain crosses the membrane as a helical span at residues 20–40 (FLLLAGLILLYLLGGAAVFSA). 2 N-linked (GlcNAc...) asparagine glycosylation sites follow: asparagine 59 and asparagine 65. The segment at residues 95-115 (WDFTGAFYFVGTVVTTIGFGM) is an intramembrane region (pore-forming). Residues threonine 110, isoleucine 111, and glycine 112 each contribute to the K(+) site. The segment at 110-115 (TIGFGM) is selectivity filter 1. The chain crosses the membrane as a helical span at residues 125-145 (VFLIFYGLIGCASTILFFNLF). At 146–193 (LERLITVIAYVMRTCHHQQLRRRGTVARDNRKAPRKGEADSLAGWKPS) the chain is on the cytoplasmic side. A helical membrane pass occupies residues 194–214 (VYYVMLILCLASVAISCGASA). Positions 224 to 244 (YFDSVYFCFVASSTIGFGDLV) form an intramembrane region, pore-forming. 4 residues coordinate K(+): threonine 237, isoleucine 238, glycine 239, and phenylalanine 240. Residues 237 to 242 (TIGFGD) form a selectivity filter 2 region. Residues 263–283 (FFILMGVCCIYSMFNVISILI) traverse the membrane as a helical segment. Residues 284–405 (KQTVNWILRK…NRLAETSGDR (122 aa)) lie on the Cytoplasmic side of the membrane.

It belongs to the two pore domain potassium channel (TC 1.A.1.8) family. As to quaternary structure, homodimer. Heterodimer with KCNK12. Ubiquitous. In brain expression is rather low and restricted to the olfactory bulb and tubercle, to the ventromedial hypothalamic nucleus, lateral septal nucleus dorsal, lateral mammillary nucleus, lateral parabrachial nuclei, reticular nucleus and reunions nuclei.

It localises to the cell membrane. The enzyme catalyses K(+)(in) = K(+)(out). The channel currents are activated by arachidonic acid, inhibited by volatile anesthetic halothane, partially inhibited by Ba(2+) ions and only weakly inhibited by extracellular acidification to pH 6. In terms of biological role, k(+) channel that conducts outward rectifying tonic currents potentiated by purinergic signals. Homo- and heterodimerizes to form functional channels with distinct regulatory and gating properties. Contributes most of K(+) currents at the plasma membrane of resting microglia. Maintains a depolarized membrane potential required for proper ramified microglia morphology and phagocytosis, selectively mediating microglial pruning of presynaptic compartments at hippocampal excitatory synapses. Upon local release of ATP caused by neuronal injury or infection, it is potentiated by P2RY12 and P2RX7 receptor signaling and contributes to ATP-triggered K(+) efflux underlying microglial NLRP3 inflammasome assembly and IL1B release. The sequence is that of Potassium channel subfamily K member 13 from Rattus norvegicus (Rat).